The following is a 107-amino-acid chain: Nucleoid-associated protein A1I_00660 (107 aa).

The tract at residues 81–107 is disordered; it reads KCDSDSQNSMSGALSGMSLPPGFKMPF.

It belongs to the YbaB/EbfC family. In terms of assembly, homodimer.

It is found in the cytoplasm. The protein localises to the nucleoid. Functionally, binds to DNA and alters its conformation. May be involved in regulation of gene expression, nucleoid organization and DNA protection. In Rickettsia bellii (strain OSU 85-389), this protein is Nucleoid-associated protein A1I_00660.